Here is a 333-residue protein sequence, read N- to C-terminus: 4-hydroxy-3-methylbut-2-enyl diphosphate reductase (333 aa).

Cys-20 is a [4Fe-4S] cluster binding site. (2E)-4-hydroxy-3-methylbut-2-enyl diphosphate is bound by residues His-49 and His-85. Dimethylallyl diphosphate-binding residues include His-49 and His-85. Isopentenyl diphosphate-binding residues include His-49 and His-85. Position 107 (Cys-107) interacts with [4Fe-4S] cluster. His-135 contributes to the (2E)-4-hydroxy-3-methylbut-2-enyl diphosphate binding site. His-135 contacts dimethylallyl diphosphate. Residue His-135 coordinates isopentenyl diphosphate. Glu-137 functions as the Proton donor in the catalytic mechanism. Residue Thr-176 participates in (2E)-4-hydroxy-3-methylbut-2-enyl diphosphate binding. Cys-206 contributes to the [4Fe-4S] cluster binding site. Residues Ser-234, Ser-235, Asn-236, and Ser-279 each contribute to the (2E)-4-hydroxy-3-methylbut-2-enyl diphosphate site. Positions 234, 235, 236, and 279 each coordinate dimethylallyl diphosphate. Isopentenyl diphosphate is bound by residues Ser-234, Ser-235, Asn-236, and Ser-279.

Belongs to the IspH family. [4Fe-4S] cluster serves as cofactor.

The enzyme catalyses isopentenyl diphosphate + 2 oxidized [2Fe-2S]-[ferredoxin] + H2O = (2E)-4-hydroxy-3-methylbut-2-enyl diphosphate + 2 reduced [2Fe-2S]-[ferredoxin] + 2 H(+). It catalyses the reaction dimethylallyl diphosphate + 2 oxidized [2Fe-2S]-[ferredoxin] + H2O = (2E)-4-hydroxy-3-methylbut-2-enyl diphosphate + 2 reduced [2Fe-2S]-[ferredoxin] + 2 H(+). Its pathway is isoprenoid biosynthesis; dimethylallyl diphosphate biosynthesis; dimethylallyl diphosphate from (2E)-4-hydroxy-3-methylbutenyl diphosphate: step 1/1. It functions in the pathway isoprenoid biosynthesis; isopentenyl diphosphate biosynthesis via DXP pathway; isopentenyl diphosphate from 1-deoxy-D-xylulose 5-phosphate: step 6/6. In terms of biological role, catalyzes the conversion of 1-hydroxy-2-methyl-2-(E)-butenyl 4-diphosphate (HMBPP) into a mixture of isopentenyl diphosphate (IPP) and dimethylallyl diphosphate (DMAPP). Acts in the terminal step of the DOXP/MEP pathway for isoprenoid precursor biosynthesis. The protein is 4-hydroxy-3-methylbut-2-enyl diphosphate reductase of Rhizobium leguminosarum bv. trifolii (strain WSM2304).